The following is a 102-amino-acid chain: Small ribosomal subunit protein uS10 (102 aa).

This sequence belongs to the universal ribosomal protein uS10 family. In terms of assembly, part of the 30S ribosomal subunit.

Its function is as follows. Involved in the binding of tRNA to the ribosomes. In Thermotoga maritima (strain ATCC 43589 / DSM 3109 / JCM 10099 / NBRC 100826 / MSB8), this protein is Small ribosomal subunit protein uS10.